A 176-amino-acid polypeptide reads, in one-letter code: Tail tube terminator protein (176 aa).

As to quaternary structure, homohexamer. Interacts with completion protein gp15.

It localises to the virion. In terms of biological role, plays an essential role in tail assembly by capping the rapidly polymerizing tail once it has reached its requisite length and serving as the interaction surface for the completion protein. The protein is Tail tube terminator protein (3) of Escherichia coli (Bacteriophage T4).